Reading from the N-terminus, the 314-residue chain is Taste receptor type 2 member 42 (314 aa).

Over 1–7 (MATELDK) the chain is Extracellular. Residues 8–28 (IFLILAIAEFIISMLGNVFIG) traverse the membrane as a helical segment. The Cytoplasmic segment spans residues 29 to 50 (LVNCSEGIKNQKVFSADFILTC). A helical membrane pass occupies residues 51–71 (LAISTIGQLLVILFDSFLVGL). At 72–101 (ASHLYTTYRLGKTVIMLWHMTNHLTTWLAT) the chain is on the extracellular side. A helical transmembrane segment spans residues 102 to 122 (CLSIFYFFKIAHFPHSLFLWL). Over 123-127 (RWRMN) the chain is Cytoplasmic. The helical transmembrane segment at 128–148 (GMIVMLLILSLFLLIFDSLVL) threads the bilayer. Over 149-187 (EIFIDISLNIIDKSNLTLYLDESKTLYDKLSILKTLLSL) the chain is Extracellular. A glycan (N-linked (GlcNAc...) asparagine) is linked at Asn163. A helical membrane pass occupies residues 188–208 (TSFIPFSLFLTSLLFLFLSLV). At 209–238 (RHTRNLKLSSLGSRDSSTEAHRRAMKMVMS) the chain is on the cytoplasmic side. Residues 239–259 (FLFLFIVHFFSLQVANWIFFM) form a helical membrane-spanning segment. The Extracellular segment spans residues 260–265 (LWNNKC). A helical membrane pass occupies residues 266–286 (IKFVMLALNAFPSCHSFILIL). Over 287–314 (GNSKLQQTAVRLLWHLRNYTKTPNPLPL) the chain is Cytoplasmic.

The protein belongs to the G-protein coupled receptor T2R family.

Its subcellular location is the membrane. Receptor that may play a role in the perception of bitterness and is gustducin-linked. May play a role in sensing the chemical composition of the gastrointestinal content. The activity of this receptor may stimulate alpha gustducin, mediate PLC-beta-2 activation and lead to the gating of TRPM5. In Homo sapiens (Human), this protein is Taste receptor type 2 member 42 (TAS2R42).